Reading from the N-terminus, the 554-residue chain is Glucose-6-phosphate isomerase (554 aa).

The active-site Proton donor is Glu-359. Active-site residues include His-390 and Lys-518.

It belongs to the GPI family.

Its subcellular location is the cytoplasm. It catalyses the reaction alpha-D-glucose 6-phosphate = beta-D-fructose 6-phosphate. The protein operates within carbohydrate biosynthesis; gluconeogenesis. Its pathway is carbohydrate degradation; glycolysis; D-glyceraldehyde 3-phosphate and glycerone phosphate from D-glucose: step 2/4. Functionally, catalyzes the reversible isomerization of glucose-6-phosphate to fructose-6-phosphate. The polypeptide is Glucose-6-phosphate isomerase (Pseudomonas fluorescens (strain SBW25)).